The sequence spans 140 residues: Putative transcription elongation factor S-II-like protein 349L (140 aa).

The TFIIS-type zinc-finger motif lies at 100-139 (GAIKCKCGSERVFSFSKQTRSGDESTSVFALCSSCKSKWV). Residues C104, C106, C131, and C134 each coordinate Zn(2+).

This sequence belongs to the IIV-6 349L family.

The chain is Putative transcription elongation factor S-II-like protein 349L from Acheta domesticus (House cricket).